The sequence spans 479 residues: Glycerol-3-phosphate acyltransferase RAM2 (479 aa).

Transmembrane regions (helical) follow at residues 14–34 (YFAL…LVLA), 37–57 (LAGL…LIFA), 215–235 (SPLM…LACL), and 237–257 (IAAG…ALGV). An HXXXXD motif motif is present at residues 284–289 (HRTLLD). Residue Asn-448 is glycosylated (N-linked (GlcNAc...) asparagine).

It belongs to the GPAT/DAPAT family.

The protein localises to the membrane. It carries out the reaction sn-glycerol 3-phosphate + an acyl-CoA = a 1-acyl-sn-glycero-3-phosphate + CoA. It functions in the pathway lipid metabolism; glycerolipid metabolism. Functionally, involved in the production of cutin monomers. Esterifies acyl-group from acyl-ACP to the sn-2 position of glycerol-3-phosphate, a step in cutin biosynthesis. Required for colonization of the root by mycorrhizal fungi, and appropriate hyphopodia and arbuscule formation. Cutin monomers act as plant signals that promote colonization by arbuscular mycorrhizal fungi. This signaling function has been recruited by pathogenic oomycetes to facilitate appressoria formation and their own invasion. This Petunia hybrida (Petunia) protein is Glycerol-3-phosphate acyltransferase RAM2.